A 776-amino-acid chain; its full sequence is DNA ligase (776 aa).

NAD(+) contacts are provided by residues 31 to 35, 80 to 81, and glutamate 112; these read DAEYD and SL. Residue lysine 114 is the N6-AMP-lysine intermediate of the active site. The NAD(+) site is built by arginine 135, glutamate 172, lysine 288, and lysine 312. The Zn(2+) site is built by cysteine 406, cysteine 409, cysteine 436, and cysteine 442. In terms of domain architecture, BRCT spans 693–776; the sequence is AEGLPLAGQT…TFLAEQGIAV (84 aa).

It belongs to the NAD-dependent DNA ligase family. LigA subfamily. Mg(2+) serves as cofactor. The cofactor is Mn(2+).

It carries out the reaction NAD(+) + (deoxyribonucleotide)n-3'-hydroxyl + 5'-phospho-(deoxyribonucleotide)m = (deoxyribonucleotide)n+m + AMP + beta-nicotinamide D-nucleotide.. DNA ligase that catalyzes the formation of phosphodiester linkages between 5'-phosphoryl and 3'-hydroxyl groups in double-stranded DNA using NAD as a coenzyme and as the energy source for the reaction. It is essential for DNA replication and repair of damaged DNA. This is DNA ligase from Pseudomonas putida (strain ATCC 700007 / DSM 6899 / JCM 31910 / BCRC 17059 / LMG 24140 / F1).